Reading from the N-terminus, the 542-residue chain is Chaperonin GroEL (542 aa).

ATP contacts are provided by residues 29 to 32 (TIGP), 86 to 90 (DGTTT), Gly-413, 477 to 479 (NAA), and Asp-493.

The protein belongs to the chaperonin (HSP60) family. As to quaternary structure, forms a cylinder of 14 subunits composed of two heptameric rings stacked back-to-back. Interacts with the co-chaperonin GroES.

Its subcellular location is the cytoplasm. The catalysed reaction is ATP + H2O + a folded polypeptide = ADP + phosphate + an unfolded polypeptide.. Its function is as follows. Together with its co-chaperonin GroES, plays an essential role in assisting protein folding. The GroEL-GroES system forms a nano-cage that allows encapsulation of the non-native substrate proteins and provides a physical environment optimized to promote and accelerate protein folding. This chain is Chaperonin GroEL, found in Lactobacillus acidophilus (strain ATCC 700396 / NCK56 / N2 / NCFM).